The following is a 273-amino-acid chain: Large ribosomal subunit protein uL2cz/uL2cy (273 aa).

Disordered regions lie at residues 1–23 and 223–273; these read MAIHLYKTSTPSTRNGAVDSQVK and NPVD…RRSK.

It belongs to the universal ribosomal protein uL2 family. Part of the 50S ribosomal subunit.

The protein resides in the plastid. The protein localises to the chloroplast. In Oenothera argillicola (Appalachian evening primrose), this protein is Large ribosomal subunit protein uL2cz/uL2cy (rpl2-A).